Here is a 339-residue protein sequence, read N- to C-terminus: Geranylgeranyl transferase type-2 subunit beta (339 aa).

At Thr11 the chain carries Phosphothreonine. 6 PFTB repeats span residues 28-69 (LEKH…DLMG), 76-117 (REEI…TLYD), 124-165 (VDKV…ALLG), 172-213 (VEKA…AITS), 220-261 (SDLL…KIIG), and 268-310 (REKL…SLLG). Geranylgeranyl diphosphate-binding positions include 198–200 (HAG) and 240–243 (RPEK). Residues Asp246 and Cys248 each coordinate Zn(2+). Residues Tyr249 and 249 to 252 (YSWW) each bind geranylgeranyl diphosphate. Residue His298 participates in Zn(2+) binding.

Belongs to the protein prenyltransferase subunit beta family. As to quaternary structure, heterotrimer composed of RABGGTA, RABGGTB and CHM; within this trimer, RABGGTA and RABGGTB form the catalytic component B, while CHM (component A) mediates peptide substrate binding. The Rab GGTase dimer (RGGT) interacts with CHM (component A) prior to Rab protein binding; the association is stabilized by geranylgeranyl pyrophosphate (GGpp). The CHM:RGGT:Rab complex is destabilized by GGpp. Interaction of RABGGTB with prenylated PTP4A2 precludes its association with RABGGTA and inhibits enzyme activity. Interacts with CHODL. Interacts with non-phosphorylated form of RAB8A; phosphorylation of RAB8A at 'Thr-72' disrupts this interaction. The cofactor is Zn(2+). In terms of tissue distribution, ubiquitous. Detected in all the major organs in adult animals.

It catalyses the reaction geranylgeranyl diphosphate + L-cysteinyl-[protein] = S-geranylgeranyl-L-cysteinyl-[protein] + diphosphate. Its activity is regulated as follows. The enzymatic reaction requires the aid of a Rab escort protein (also called component A), such as CHM. Functionally, catalyzes the transfer of a geranylgeranyl moiety from geranylgeranyl diphosphate to both cysteines of Rab proteins with the C-terminal sequence -XXCC, -XCXC and -CCXX, such as RAB1A, RAB3A, RAB5A and RAB7A. The protein is Geranylgeranyl transferase type-2 subunit beta (Rabggtb) of Mus musculus (Mouse).